We begin with the raw amino-acid sequence, 142 residues long: Sec-independent protein translocase protein TatB (142 aa).

A helical membrane pass occupies residues 1–21 (MFDIGASELLVLVIVAIVVIG). Positions 75 to 142 (RETAAQETAA…PAARPGSQQP (68 aa)) are disordered. The span at 76 to 94 (ETAAQETAAAQGQTPAAAE) shows a compositional bias: low complexity. Residues 123 to 133 (AKVEARVEEAP) show a composition bias toward basic and acidic residues.

This sequence belongs to the TatB family. The Tat system comprises two distinct complexes: a TatABC complex, containing multiple copies of TatA, TatB and TatC subunits, and a separate TatA complex, containing only TatA subunits. Substrates initially bind to the TatABC complex, which probably triggers association of the separate TatA complex to form the active translocon.

The protein localises to the cell inner membrane. Part of the twin-arginine translocation (Tat) system that transports large folded proteins containing a characteristic twin-arginine motif in their signal peptide across membranes. Together with TatC, TatB is part of a receptor directly interacting with Tat signal peptides. TatB may form an oligomeric binding site that transiently accommodates folded Tat precursor proteins before their translocation. This chain is Sec-independent protein translocase protein TatB, found in Novosphingobium aromaticivorans (strain ATCC 700278 / DSM 12444 / CCUG 56034 / CIP 105152 / NBRC 16084 / F199).